A 333-amino-acid polypeptide reads, in one-letter code: tRNA N6-adenosine threonylcarbamoyltransferase (333 aa).

Residues His-111 and His-115 each coordinate Fe cation. Substrate is bound by residues 134-138 (LASGG), Asp-167, Gly-180, and Asn-273. Asp-301 is a binding site for Fe cation.

Belongs to the KAE1 / TsaD family. Requires Fe(2+) as cofactor.

It localises to the cytoplasm. The enzyme catalyses L-threonylcarbamoyladenylate + adenosine(37) in tRNA = N(6)-L-threonylcarbamoyladenosine(37) in tRNA + AMP + H(+). In terms of biological role, required for the formation of a threonylcarbamoyl group on adenosine at position 37 (t(6)A37) in tRNAs that read codons beginning with adenine. Is involved in the transfer of the threonylcarbamoyl moiety of threonylcarbamoyl-AMP (TC-AMP) to the N6 group of A37, together with TsaE and TsaB. TsaD likely plays a direct catalytic role in this reaction. The protein is tRNA N6-adenosine threonylcarbamoyltransferase of Desulforapulum autotrophicum (strain ATCC 43914 / DSM 3382 / VKM B-1955 / HRM2) (Desulfobacterium autotrophicum).